Here is a 168-residue protein sequence, read N- to C-terminus: Plastocyanin, chloroplastic (168 aa).

The transit peptide at 1–69 (MATVTSTTVA…SAVLASNALA (69 aa)) directs the protein to the chloroplast. The Plastocyanin-like domain occupies 70–168 (VEVLLGASDG…AGMVGQVTVN (99 aa)). H106, C153, H156, and M161 together coordinate Cu cation.

The protein belongs to the plastocyanin family. It depends on Cu(2+) as a cofactor.

Its subcellular location is the plastid. It localises to the chloroplast thylakoid membrane. Its function is as follows. Participates in electron transfer between P700 and the cytochrome b6-f complex in photosystem I. This Pisum sativum (Garden pea) protein is Plastocyanin, chloroplastic (PETE).